We begin with the raw amino-acid sequence, 212 residues long: ATP-dependent Clp protease proteolytic subunit (212 aa).

The Nucleophile role is filled by serine 113. Histidine 138 is an active-site residue.

The protein belongs to the peptidase S14 family. Fourteen ClpP subunits assemble into 2 heptameric rings which stack back to back to give a disk-like structure with a central cavity, resembling the structure of eukaryotic proteasomes.

It localises to the cytoplasm. It catalyses the reaction Hydrolysis of proteins to small peptides in the presence of ATP and magnesium. alpha-casein is the usual test substrate. In the absence of ATP, only oligopeptides shorter than five residues are hydrolyzed (such as succinyl-Leu-Tyr-|-NHMec, and Leu-Tyr-Leu-|-Tyr-Trp, in which cleavage of the -Tyr-|-Leu- and -Tyr-|-Trp bonds also occurs).. Functionally, cleaves peptides in various proteins in a process that requires ATP hydrolysis. Has a chymotrypsin-like activity. Plays a major role in the degradation of misfolded proteins. The chain is ATP-dependent Clp protease proteolytic subunit from Saccharophagus degradans (strain 2-40 / ATCC 43961 / DSM 17024).